The primary structure comprises 207 residues: Large ribosomal subunit protein uL4 (207 aa).

The segment at 57 to 78 is disordered; the sequence is VAGGGKKPWRQKGTGRARHGSI. Residues 63 to 77 are compositionally biased toward basic residues; sequence KPWRQKGTGRARHGS.

This sequence belongs to the universal ribosomal protein uL4 family. In terms of assembly, part of the 50S ribosomal subunit.

In terms of biological role, one of the primary rRNA binding proteins, this protein initially binds near the 5'-end of the 23S rRNA. It is important during the early stages of 50S assembly. It makes multiple contacts with different domains of the 23S rRNA in the assembled 50S subunit and ribosome. Functionally, forms part of the polypeptide exit tunnel. The sequence is that of Large ribosomal subunit protein uL4 from Onion yellows phytoplasma (strain OY-M).